A 588-amino-acid polypeptide reads, in one-letter code: Calicin (588 aa).

The BTB domain occupies 28-98 (WDIALTVDHH…FYSGKVVISE (71 aa)). At Ser149 the chain carries Phosphoserine. Kelch repeat units follow at residues 280–327 (SVVI…SAGR), 328–375 (YIYI…TCGG), 377–423 (VYSV…TRGD), 425–475 (NLYI…SFHQ), 476–525 (DNIL…VGDN), and 526–580 (KVFV…LAKL).

Interacts with CYLC1; the interaction may be relevant for proper acrosome attachment to the nuclear envelope. Expressed in testis and in spermatozoa (at protein level).

It localises to the cytoplasm. It is found in the cytoskeleton. The protein localises to the perinuclear theca. The protein resides in the calyx. Its function is as follows. Required for both nuclear and acrosomal shaping during spermiogenesis. The polypeptide is Calicin (CCIN) (Bos taurus (Bovine)).